The following is a 405-amino-acid chain: Alpha-1-antiproteinase S (405 aa).

Positions 1–24 (MPSAIPRGLLLLAGLCCLVFGIMA) are cleaved as a signal peptide. 4 N-linked (GlcNAc...) asparagine glycosylation sites follow: N57, N94, N157, and N258. An RCL region spans residues 360 to 379 (GATMMEFMPMSLPEDLSFNK).

It belongs to the serpin family.

The protein localises to the secreted. In terms of biological role, inhibits elastase, chymotrypsin, cathepsin G, plasmin, and trypsin. This Cavia porcellus (Guinea pig) protein is Alpha-1-antiproteinase S.